A 517-amino-acid polypeptide reads, in one-letter code: Putative succinate-semialdehyde dehydrogenase [NADP(+)] (517 aa).

Residues 157–158, 181–184, and 232–233 contribute to the NADP(+) site; these read WN, KPDS, and GS. Glu-254 serves as the catalytic Proton acceptor. Residue Leu-255 coordinates NADP(+). Cys-288 functions as the Nucleophile in the catalytic mechanism. Glu-386 contributes to the NADP(+) binding site.

This sequence belongs to the aldehyde dehydrogenase family.

It catalyses the reaction succinate semialdehyde + NADP(+) + H2O = succinate + NADPH + 2 H(+). In terms of biological role, catalyzes the NADP(+)-dependent oxidation of succinate semialdehyde to succinate. Although it has succinate semialdehyde dehydrogenase activity, is likely to act physiologically on a different aldehyde(s). This Mycolicibacterium smegmatis (strain ATCC 700084 / mc(2)155) (Mycobacterium smegmatis) protein is Putative succinate-semialdehyde dehydrogenase [NADP(+)] (gabD2).